The following is a 312-amino-acid chain: Cell division control protein 2 homolog D (312 aa).

Residues 14–304 (FVKLEKVGEG…AKKAMEHPYF (291 aa)) enclose the Protein kinase domain. ATP contacts are provided by residues 20–28 (VGEGTYGKV) and Lys-43. The residue at position 24 (Thr-24) is a Phosphothreonine. A Phosphotyrosine modification is found at Tyr-25. The active-site Proton acceptor is Asp-145. Phosphothreonine; by CAK is present on Thr-179.

It belongs to the protein kinase superfamily. CMGC Ser/Thr protein kinase family. CDC2/CDKX subfamily.

The enzyme catalyses L-seryl-[protein] + ATP = O-phospho-L-seryl-[protein] + ADP + H(+). The catalysed reaction is L-threonyl-[protein] + ATP = O-phospho-L-threonyl-[protein] + ADP + H(+). It carries out the reaction [DNA-directed RNA polymerase] + ATP = phospho-[DNA-directed RNA polymerase] + ADP + H(+). Its function is as follows. Plays a key role in the control of the eukaryotic cell cycle. This Antirrhinum majus (Garden snapdragon) protein is Cell division control protein 2 homolog D (CDC2D).